The sequence spans 243 residues: 2-C-methyl-D-erythritol 4-phosphate cytidylyltransferase (243 aa).

This sequence belongs to the IspD/TarI cytidylyltransferase family. IspD subfamily.

The catalysed reaction is 2-C-methyl-D-erythritol 4-phosphate + CTP + H(+) = 4-CDP-2-C-methyl-D-erythritol + diphosphate. It participates in isoprenoid biosynthesis; isopentenyl diphosphate biosynthesis via DXP pathway; isopentenyl diphosphate from 1-deoxy-D-xylulose 5-phosphate: step 2/6. Catalyzes the formation of 4-diphosphocytidyl-2-C-methyl-D-erythritol from CTP and 2-C-methyl-D-erythritol 4-phosphate (MEP). This Rhodopirellula baltica (strain DSM 10527 / NCIMB 13988 / SH1) protein is 2-C-methyl-D-erythritol 4-phosphate cytidylyltransferase.